A 231-amino-acid chain; its full sequence is ATP phosphoribosyltransferase (231 aa).

This sequence belongs to the ATP phosphoribosyltransferase family. Short subfamily. Heteromultimer composed of HisG and HisZ subunits.

The protein localises to the cytoplasm. It carries out the reaction 1-(5-phospho-beta-D-ribosyl)-ATP + diphosphate = 5-phospho-alpha-D-ribose 1-diphosphate + ATP. Its pathway is amino-acid biosynthesis; L-histidine biosynthesis; L-histidine from 5-phospho-alpha-D-ribose 1-diphosphate: step 1/9. In terms of biological role, catalyzes the condensation of ATP and 5-phosphoribose 1-diphosphate to form N'-(5'-phosphoribosyl)-ATP (PR-ATP). Has a crucial role in the pathway because the rate of histidine biosynthesis seems to be controlled primarily by regulation of HisG enzymatic activity. The protein is ATP phosphoribosyltransferase of Psychrobacter arcticus (strain DSM 17307 / VKM B-2377 / 273-4).